A 197-amino-acid polypeptide reads, in one-letter code: Phospholipid hydroperoxide glutathione peroxidase (197 aa).

S40 is subject to Phosphoserine. U73 is an active-site residue. Position 73 (U73) is a non-standard amino acid, selenocysteine.

Belongs to the glutathione peroxidase family. Monomer. Has a tendency to form higher mass oligomers. Interacts with FUNDC1; this interaction promotes GPX4 recruitment into mitochondria through TOM/TIM complex where it is degraded by mitophagy. As to expression, expressed very intensively in the testis and weakly in lung, heart, and cerebellum.

Its subcellular location is the mitochondrion. It is found in the cytoplasm. The catalysed reaction is a hydroperoxy polyunsaturated fatty acid + 2 glutathione = a hydroxy polyunsaturated fatty acid + glutathione disulfide + H2O. The enzyme catalyses 2 glutathione + H2O2 = glutathione disulfide + 2 H2O. It carries out the reaction tert-butyl hydroperoxide + 2 glutathione = tert-butanol + glutathione disulfide + H2O. It catalyses the reaction cumene hydroperoxide + 2 glutathione = 2-phenylpropan-2-ol + glutathione disulfide + H2O. The catalysed reaction is (9S)-hydroperoxy-(10E,12Z)-octadecadienoate + 2 glutathione = (9S)-hydroxy-(10E,12Z)-octadecadienoate + glutathione disulfide + H2O. The enzyme catalyses (13S)-hydroperoxy-(9Z,11E)-octadecadienoate + 2 glutathione = (13S)-hydroxy-(9Z,11E)-octadecadienoate + glutathione disulfide + H2O. It carries out the reaction (5S)-hydroperoxy-(6E,8Z,11Z,14Z)-eicosatetraenoate + 2 glutathione = (5S)-hydroxy-(6E,8Z,11Z,14Z)-eicosatetraenoate + glutathione disulfide + H2O. It catalyses the reaction (12R)-hydroperoxy-(5Z,8Z,10E,14Z)-eicosatetraenoate + 2 glutathione = (12R)-hydroxy-(5Z,8Z,10E,14Z)-eicosatetraenoate + glutathione disulfide + H2O. The catalysed reaction is (12S)-hydroperoxy-(5Z,8Z,10E,14Z)-eicosatetraenoate + 2 glutathione = (12S)-hydroxy-(5Z,8Z,10E,14Z)-eicosatetraenoate + glutathione disulfide + H2O. The enzyme catalyses (15S)-hydroperoxy-(5Z,8Z,11Z,13E)-eicosatetraenoate + 2 glutathione = (15S)-hydroxy-(5Z,8Z,11Z,13E)-eicosatetraenoate + glutathione disulfide + H2O. It carries out the reaction (5S)-hydroperoxy-(6E,8Z,11Z,14Z,17Z)-eicosapentaenoate + 2 glutathione = (5S)-hydroxy-(6E,8Z,11Z,14Z,17Z)-eicosapentaenoate + glutathione disulfide + H2O. It catalyses the reaction (12S)-hydroperoxy-(5Z,8Z,10E,14Z,17Z)-eicosapentaenoate + 2 glutathione = (12S)-hydroxy-(5Z,8Z,10E,14Z,17Z)-eicosapentaenoate + glutathione disulfide + H2O. The catalysed reaction is (15S)-hydroperoxy-(5Z,8Z,11Z,13E,17Z)-eicosapentaenoate + 2 glutathione = (15S)-hydroxy-(5Z,8Z,11Z,13E,17Z)-eicosapentaenoate + glutathione disulfide + H2O. The enzyme catalyses (15S)-hydroperoxy-(11Z,13E)-eicosadienoate + 2 glutathione = (15S)-hydroxy-(11Z,13E)-eicosadienoate + glutathione disulfide + H2O. It carries out the reaction (17S)-hydroperoxy-(4Z,7Z,10Z,13Z,15E,19Z)-docosahexaenoate + 2 glutathione = (17S)-hydroxy-(4Z,7Z,10Z,13Z,15E,19Z)-docosahexaenoate + glutathione disulfide + H2O. It catalyses the reaction a hydroperoxy-1,2-diacyl-glycero-3-phosphocholine + 2 glutathione = a hydroxy-1,2-diacyl-glycero-3-phosphocholine + glutathione disulfide + H2O. Essential antioxidant peroxidase that directly reduces phospholipid hydroperoxide even if they are incorporated in membranes and lipoproteins. Can also reduce fatty acid hydroperoxide, cholesterol hydroperoxide and thymine hydroperoxide. Plays a key role in protecting cells from oxidative damage by preventing membrane lipid peroxidation. Required to prevent cells from ferroptosis, a non-apoptotic cell death resulting from an iron-dependent accumulation of lipid reactive oxygen species. The presence of selenocysteine (Sec) versus Cys at the active site is essential for life: it provides resistance to overoxidation and prevents cells against ferroptosis. The presence of Sec at the active site is also essential for the survival of a specific type of parvalbumin-positive interneurons, thereby preventing against fatal epileptic seizures. May be required to protect cells from the toxicity of ingested lipid hydroperoxides. Required for normal sperm development and male fertility. Essential for maturation and survival of photoreceptor cells. Plays a role in a primary T-cell response to viral and parasitic infection by protecting T-cells from ferroptosis and by supporting T-cell expansion. Plays a role of glutathione peroxidase in platelets in the arachidonic acid metabolism. Reduces hydroperoxy ester lipids formed by a 15-lipoxygenase that may play a role as down-regulator of the cellular 15-lipoxygenase pathway. Can also reduce small soluble hydroperoxides such as H2O2, cumene hydroperoxide and tert-butyl hydroperoxide. The polypeptide is Phospholipid hydroperoxide glutathione peroxidase (Macaca fuscata fuscata (Japanese macaque)).